The primary structure comprises 290 residues: Forkhead box protein O3B (290 aa).

Disordered stretches follow at residues 1 to 30 and 44 to 239; these read METDLAEMPEKGVLSSQDSPHFQEKSTEEG and AAAA…SSRR. 2 stretches are compositionally biased toward low complexity: residues 44–59 and 75–91; these read AAAAAAPGSRSLRGVH and RTPAAAGRAAKMAEAPA. Thr-117 is subject to Phosphothreonine; by PKB/AKT1. The span at 142-153 shows a compositional bias: acidic residues; it reads IPEEEDDEDDED. The segment at residues 242-290 is a DNA-binding region (fork-head); sequence WGNLSYADLITRAIESSPDRRLTLSQIYEWMVSCVPYFKDKGNSNSSAG.

The protein resides in the cytoplasm. Its subcellular location is the cytosol. In terms of biological role, transcription factor. This is Forkhead box protein O3B from Homo sapiens (Human).